We begin with the raw amino-acid sequence, 906 residues long: Eukaryotic translation initiation factor 3 subunit C (906 aa).

A disordered region spans residues 1 to 22 (MSRFFANGSDSESESSEEEVQA). Residues 11-20 (SESESSEEEV) are compositionally biased toward acidic residues. A phosphoserine mark is found at serine 34, serine 165, serine 176, and serine 185. The tract at residues 158-283 (REAPDQESEA…KRPEDDEDGE (126 aa)) is disordered. Over residues 162–186 (DQESEAEDEEAAQDSDGGDAGDDSD) the composition is skewed to acidic residues. Residues 195–209 (EAAPKVAKTVPAKAA) show a composition bias toward low complexity. Residues 211-237 (ADDDDSDDSIDWDSDSETETESSDDEN) show a composition bias toward acidic residues. Basic and acidic residues predominate over residues 242 to 270 (MRERFLKRTTEKEEKDDDKRKDKRKEQKI). The region spanning 641 to 817 (FHMHINLELL…ETVVMHRSEP (177 aa)) is the PCI domain. Disordered stretches follow at residues 853-873 (GNMG…NWGG) and 887-906 (QRGR…IDEE). The span at 894 to 906 (QQQQQQVQTIDEE) shows a compositional bias: low complexity.

It belongs to the eIF-3 subunit C family. Component of the eukaryotic translation initiation factor 3 (eIF-3) complex. The eIF-3 complex interacts with pix.

Its subcellular location is the cytoplasm. Component of the eukaryotic translation initiation factor 3 (eIF-3) complex, which is involved in protein synthesis of a specialized repertoire of mRNAs and, together with other initiation factors, stimulates binding of mRNA and methionyl-tRNAi to the 40S ribosome. The eIF-3 complex specifically targets and initiates translation of a subset of mRNAs involved in cell proliferation. The protein is Eukaryotic translation initiation factor 3 subunit C of Drosophila ananassae (Fruit fly).